The primary structure comprises 214 residues: MLDTSQEIMKGTTTVGLIFDGGVVLATEMRATMGNMIASKRAKKIYQITPRIGLTTAGGVGDAQQLVRILQVECNLFEMRRGKTMSVGAASTLLSNYLNQNRYYPYYVQLLMGGFDDEGPSVYSVDAMGGATKEEDIVATGSGSPFAYGVLEDQYRAGMKEDDAKDLAVRAVRSAMRRDSASGEDIMVVVITKDKYEEHIESGLQRPSAARPTL.

Residues 1–11 (MLDTSQEIMKG) constitute a propeptide, removed in mature form; by autocatalysis. Catalysis depends on threonine 12, which acts as the Nucleophile.

Belongs to the peptidase T1B family. In terms of assembly, the 20S proteasome core is composed of 14 alpha and 14 beta subunits that assemble into four stacked heptameric rings, resulting in a barrel-shaped structure. The two inner rings, each composed of seven catalytic beta subunits, are sandwiched by two outer rings, each composed of seven alpha subunits. The catalytic chamber with the active sites is on the inside of the barrel. Has a gated structure, the ends of the cylinder being occluded by the N-termini of the alpha-subunits. Is capped at one or both ends by the proteasome regulatory ATPase, PAN.

The protein localises to the cytoplasm. It catalyses the reaction Cleavage of peptide bonds with very broad specificity.. With respect to regulation, the formation of the proteasomal ATPase PAN-20S proteasome complex, via the docking of the C-termini of PAN into the intersubunit pockets in the alpha-rings, triggers opening of the gate for substrate entry. Interconversion between the open-gate and close-gate conformations leads to a dynamic regulation of the 20S proteasome proteolysis activity. In terms of biological role, component of the proteasome core, a large protease complex with broad specificity involved in protein degradation. In Methanoculleus marisnigri (strain ATCC 35101 / DSM 1498 / JR1), this protein is Proteasome subunit beta.